Reading from the N-terminus, the 412-residue chain is MIARCKGCSDLLPEDMLRFRYIESIFHDSCITWGYEEVRTPMLEYLSLFTSSGTLTPQMLKRVYSFLDWDGWSGERVVLRPDGTIPAARLYIDSLQEMDVARLCYTSNIFRFDETGKKSRENWQLGAELIGVTSPEANAELITLALETLARLGFEDVELRLSHAQLIKAVLAQLEPNADEQHKIFDQLLDGDIALMSRLETEKPELFRTLKLLMENKGTSASFLKNVMAMAGTAGGELEEPLNDFIAGVDVLDKLGVSYQIDLASGKGFEYYTGVIFHLFVNGEHVGGGGRYDKLIPLLGGPDKPAAGFALYLNRLIPMIDAEDMYDMVEEKILIKYQGDNLKTAYEIANLIRECGISAELFYPGVDTAAYGWAVTVKAEDCYEVTDLIEDKTLELKEQSEVIYLLNGEEDA.

It belongs to the class-II aminoacyl-tRNA synthetase family. HisZ subfamily. As to quaternary structure, heteromultimer composed of HisG and HisZ subunits.

It localises to the cytoplasm. It participates in amino-acid biosynthesis; L-histidine biosynthesis; L-histidine from 5-phospho-alpha-D-ribose 1-diphosphate: step 1/9. Its function is as follows. Required for the first step of histidine biosynthesis. May allow the feedback regulation of ATP phosphoribosyltransferase activity by histidine. This is ATP phosphoribosyltransferase regulatory subunit from Dehalococcoides mccartyi (strain ATCC BAA-2100 / JCM 16839 / KCTC 5957 / BAV1).